Reading from the N-terminus, the 785-residue chain is Neutral ceramidase (785 aa).

The N-terminal stretch at 1–35 (MEASSWLCYQARGFGSSRVWLWLLLALVLLNCSLV) is a signal peptide. N-linked (GlcNAc...) asparagine glycosylation is present at asparagine 31. Serine 359 serves as the catalytic Nucleophile. Residues asparagine 377, asparagine 675, and asparagine 685 are each glycosylated (N-linked (GlcNAc...) asparagine).

This sequence belongs to the neutral ceramidase family. Expressed in seedlings, with higher levels in roots than in shoots.

The protein localises to the secreted. It is found in the endoplasmic reticulum. The protein resides in the golgi apparatus. It catalyses the reaction an N-acylsphing-4-enine + H2O = sphing-4-enine + a fatty acid. With respect to regulation, enhanced activity in the presence of calcium, magnesium, manganese and zinc ions, but inhibited activity in the presence of iron ion. Functionally, hydrolyzes the sphingolipid ceramide into sphingosine and free fatty acid. Uses ceramide instead of phytoceramide as substrate. The polypeptide is Neutral ceramidase (Oryza sativa subsp. japonica (Rice)).